The primary structure comprises 145 residues: Hemoglobin subunit beta (145 aa).

The Globin domain maps to 1–145 (MLTAEEKAAV…VANALAHRYH (145 aa)). At T11 the chain carries Phosphothreonine. The residue at position 58 (K58) is an N6-acetyllysine. A heme b-binding site is contributed by H62. N6-acetyllysine is present on K81. Residue H91 participates in heme b binding. C92 is subject to S-nitrosocysteine.

The protein belongs to the globin family. As to quaternary structure, heterotetramer of two alpha chains and two beta chains. Red blood cells.

Functionally, involved in oxygen transport from the lung to the various peripheral tissues. In Alces alces alces (European moose), this protein is Hemoglobin subunit beta (HBB).